Consider the following 111-residue polypeptide: Vacuolar ATPase assembly integral membrane protein VMA21 (111 aa).

The Cytoplasmic portion of the chain corresponds to 1-39 (MATRRIVATEKSILEKDDHIGSSPAAGEKSNITPAVPLD). A helical transmembrane segment spans residues 40 to 60 (VILKLLAFTLAMVVIPIGSYF). Residues 61 to 73 (VTVNSIFKGNSTY) lie on the Lumenal side of the membrane. The helical transmembrane segment at 74 to 94 (AGALAAIMANVVLVAYVVVAM) threads the bilayer. The Cytoplasmic segment spans residues 95 to 111 (NEDQTEQEKAKEGKKDR). The Prevents secretion from ER motif lies at 108 to 111 (KKDR).

The protein belongs to the VMA21 family.

It is found in the endoplasmic reticulum membrane. The protein resides in the endoplasmic reticulum-Golgi intermediate compartment membrane. Its subcellular location is the cytoplasmic vesicle. The protein localises to the COPII-coated vesicle membrane. In terms of biological role, required for the assembly of the V0 complex of the vacuolar ATPase (V-ATPase) in the endoplasmic reticulum. This Pyricularia oryzae (strain 70-15 / ATCC MYA-4617 / FGSC 8958) (Rice blast fungus) protein is Vacuolar ATPase assembly integral membrane protein VMA21.